We begin with the raw amino-acid sequence, 914 residues long: Ubiquitin carboxyl-terminal hydrolase 20 (914 aa).

A UBP-type zinc finger spans residues 6-111 (DLCPHLDSIG…GSSSKFSEQD (106 aa)). 12 residues coordinate Zn(2+): cysteine 8, histidine 10, cysteine 30, cysteine 33, cysteine 43, cysteine 48, cysteine 53, histidine 60, histidine 64, histidine 70, cysteine 83, and cysteine 86. Serine 112, serine 132, and serine 134 each carry phosphoserine. The 541-residue stretch at 145 to 685 (TGMKNLGNSC…EGYVLFYRKS (541 aa)) folds into the USP domain. Residue cysteine 154 is the Nucleophile of the active site. Disordered stretches follow at residues 257–347 (LTEA…VDED) and 360–415 (QPAE…ASPV). Residue threonine 258 is modified to Phosphothreonine. Positions 259–279 (EARDSDSSDTDEKREGDRSPS) are enriched in basic and acidic residues. Serine 305 carries the phosphoserine modification. The span at 316–332 (EAGRAISEKERMKDRKF) shows a compositional bias: basic and acidic residues. The residue at position 368 (serine 368) is a Phosphoserine. The residue at position 377 (threonine 377) is a Phosphothreonine. Phosphoserine is present on residues serine 408 and serine 413. The Proton acceptor role is filled by histidine 643. 2 DUSP domains span residues 687 to 780 (EEAM…LYVC) and 789 to 892 (ALAK…RQSV).

This sequence belongs to the peptidase C19 family. USP20/USP33 subfamily. In terms of assembly, interacts with VHL, leading to its ubiquitination and subsequent degradation. Interacts with CCP110. Interacts with DIO2. Interacts with HIF1A. Interacts with ADRB2. Interacts with USP18. Ubiquitinated via a VHL-dependent pathway for proteasomal degradation.

The protein resides in the cytoplasm. Its subcellular location is the endoplasmic reticulum. It localises to the perinuclear region. It is found in the cytoskeleton. The protein localises to the microtubule organizing center. The protein resides in the centrosome. It carries out the reaction Thiol-dependent hydrolysis of ester, thioester, amide, peptide and isopeptide bonds formed by the C-terminal Gly of ubiquitin (a 76-residue protein attached to proteins as an intracellular targeting signal).. In terms of biological role, deubiquitinating enzyme that plays a role in many cellular processes including autophagy, cellular antiviral response or membrane protein biogenesis. Attenuates TLR4-mediated NF-kappa-B signaling by cooperating with beta-arrestin-2/ARRB2 and inhibiting TRAF6 autoubiquitination. Promotes cellular antiviral responses by deconjugating 'Lys-33' and 'Lys-48'-linked ubiquitination of STING1 leading to its stabilization. Plays an essential role in autophagy induction by regulating the ULK1 stability through deubiquitination of ULK1. Acts as a positive regulator for NF-kappa-B activation by TNF-alpha through deubiquitinating 'Lys-48'-linked polyubiquitination of SQSTM1, leading to its increased stability. Acts as a regulator of G-protein coupled receptor (GPCR) signaling by mediating the deubiquitination beta-2 adrenergic receptor (ADRB2). Plays a central role in ADRB2 recycling and resensitization after prolonged agonist stimulation by constitutively binding ADRB2, mediating deubiquitination of ADRB2 and inhibiting lysosomal trafficking of ADRB2. Upon dissociation, it is probably transferred to the translocated beta-arrestins, possibly leading to beta-arrestins deubiquitination and disengagement from ADRB2. This suggests the existence of a dynamic exchange between the ADRB2 and beta-arrestins. Deubiquitinates DIO2, thereby regulating thyroid hormone regulation. Deubiquitinates HIF1A, leading to stabilize HIF1A and enhance HIF1A-mediated activity. Deubiquitinates MCL1, a pivotal member of the anti-apoptotic Bcl-2 protein family to regulate its stability. Within the endoplasmic reticulum, participates with USP33 in the rescue of post-translationally targeted membrane proteins that are inappropriately ubiquitinated by the cytosolic protein quality control in the cytosol. This chain is Ubiquitin carboxyl-terminal hydrolase 20 (USP20), found in Homo sapiens (Human).